A 355-amino-acid polypeptide reads, in one-letter code: Phosphoserine aminotransferase (355 aa).

Position 41 (R41) interacts with L-glutamate. Pyridoxal 5'-phosphate-binding positions include 75–76, W99, T147, D166, and Q189; that span reads AS. K190 is modified (N6-(pyridoxal phosphate)lysine). 231-232 is a pyridoxal 5'-phosphate binding site; the sequence is NT.

This sequence belongs to the class-V pyridoxal-phosphate-dependent aminotransferase family. SerC subfamily. In terms of assembly, homodimer. Pyridoxal 5'-phosphate serves as cofactor.

It is found in the cytoplasm. It carries out the reaction O-phospho-L-serine + 2-oxoglutarate = 3-phosphooxypyruvate + L-glutamate. The catalysed reaction is 4-(phosphooxy)-L-threonine + 2-oxoglutarate = (R)-3-hydroxy-2-oxo-4-phosphooxybutanoate + L-glutamate. Its pathway is amino-acid biosynthesis; L-serine biosynthesis; L-serine from 3-phospho-D-glycerate: step 2/3. It participates in cofactor biosynthesis; pyridoxine 5'-phosphate biosynthesis; pyridoxine 5'-phosphate from D-erythrose 4-phosphate: step 3/5. Functionally, catalyzes the reversible conversion of 3-phosphohydroxypyruvate to phosphoserine and of 3-hydroxy-2-oxo-4-phosphonooxybutanoate to phosphohydroxythreonine. This chain is Phosphoserine aminotransferase, found in Bacteroides fragilis (strain ATCC 25285 / DSM 2151 / CCUG 4856 / JCM 11019 / LMG 10263 / NCTC 9343 / Onslow / VPI 2553 / EN-2).